A 259-amino-acid chain; its full sequence is Putative carbamate hydrolase RutD (259 aa).

This sequence belongs to the AB hydrolase superfamily. Hydrolase RutD family.

It carries out the reaction carbamate + 2 H(+) = NH4(+) + CO2. Functionally, involved in pyrimidine catabolism. May facilitate the hydrolysis of carbamate, a reaction that can also occur spontaneously. This is Putative carbamate hydrolase RutD from Pseudomonas syringae pv. syringae (strain B728a).